Reading from the N-terminus, the 1255-residue chain is Bifunctional autolysin (1255 aa).

The signal sequence occupies residues 1-36; that stretch reads MLGVINRMAKKFNYKLPSMVALTLVGSAVTAHQVQA. Disordered regions lie at residues 110–141 and 193–218; these read GDTR…NTNV and VTTF…KYKP. An N-acetylmuramoyl-L-alanine amidase region spans residues 199 to 775; sequence SAQPRSVAAT…VAQPKTAVKA (577 aa). GW domains are found at residues 442 to 516, 518 to 592, 611 to 685, 687 to 761, 783 to 858, 860 to 935, and 942 to 1016; these read TVAA…YNTA, SPVN…DTAK, TVSS…YNNA, SPVN…VPAA, TTQT…VQNL, KEVK…APTA, and AAKD…KELI. The endo-beta-N-acetylglucosaminidase stretch occupies residues 776–1255; it reads YTVTKPQTTQ…GKYFDIPQYK (480 aa).

It in the N-terminal section; belongs to the N-acetylmuramoyl-L-alanine amidase 2 family. The protein in the C-terminal section; belongs to the glycosyl hydrolase 73 family. In terms of assembly, oligomer; forms a ring structure at the cell surface which is important for efficient partitioning of daughter cells after cell division. Post-translationally, undergoes proteolytic processing to generate the two extracellular lytic enzymes, probably at the septal region on the cell surface.

Its subcellular location is the secreted. The enzyme catalyses Hydrolyzes the link between N-acetylmuramoyl residues and L-amino acid residues in certain cell-wall glycopeptides.. It catalyses the reaction an N(4)-(oligosaccharide-(1-&gt;3)-[oligosaccharide-(1-&gt;6)]-beta-D-Man-(1-&gt;4)-beta-D-GlcNAc-(1-&gt;4)-alpha-D-GlcNAc)-L-asparaginyl-[protein] + H2O = an oligosaccharide-(1-&gt;3)-[oligosaccharide-(1-&gt;6)]-beta-D-Man-(1-&gt;4)-D-GlcNAc + N(4)-(N-acetyl-beta-D-glucosaminyl)-L-asparaginyl-[protein]. Its function is as follows. Endohydrolysis of the di-N-acetylchitobiosyl unit in high-mannose glycopeptides and glycoproteins containing the -[(Man)5(GlcNAc)2]-Asn structure. One N-acetyl-D-glucosamine residue remains attached to the protein; the rest of the oligosaccharide is released intact. Cleaves the peptidoglycan connecting the daughter cells at the end of the cell division cycle, resulting in the separation of the two newly divided cells. Acts as an autolysin in penicillin-induced lysis. The sequence is that of Bifunctional autolysin (atl) from Staphylococcus aureus (strain Mu3 / ATCC 700698).